Here is a 694-residue protein sequence, read N- to C-terminus: Ribonuclease R (694 aa).

The RNB domain maps to 204 to 525 (RKDLRDLLCF…IVHRLLFHPL (322 aa)). The S1 motif domain maps to 571–648 (ATLYKAFIIT…LTQSIEWTLV (78 aa)). Positions 652-694 (TKAKAKRTSKKKKTESVTTKEKKKSPAKKKKGATKTKKGSGKN) are disordered. Composition is skewed to basic residues over residues 654–664 (AKAKRTSKKKK) and 672–694 (EKKKSPAKKKKGATKTKKGSGKN).

Belongs to the RNR ribonuclease family. RNase R subfamily.

The protein localises to the cytoplasm. The catalysed reaction is Exonucleolytic cleavage in the 3'- to 5'-direction to yield nucleoside 5'-phosphates.. In terms of biological role, 3'-5' exoribonuclease that releases 5'-nucleoside monophosphates and is involved in maturation of structured RNAs. This is Ribonuclease R from Chlamydia trachomatis serovar D (strain ATCC VR-885 / DSM 19411 / UW-3/Cx).